A 180-amino-acid polypeptide reads, in one-letter code: ADP-ribosylation factor-like protein 1 (180 aa).

G2 carries the N-myristoyl glycine lipid modification. Residues 23-30, 66-70, and 125-128 contribute to the GTP site; these read GLDGAGKT, DLGGQ, and NKQD.

This sequence belongs to the small GTPase superfamily. Arf family. As to expression, expressed in neuronal cells. Expression in hypodermal tissues is absent.

The protein localises to the golgi apparatus. It is found in the cytoplasm. The protein resides in the cytoplasmic granule. Its function is as follows. GTP-binding protein that may be involved in protein trafficking; may modulate vesicle budding and uncoating within the Golgi apparatus. Plays a role in male tail tip morphogenesis. The chain is ADP-ribosylation factor-like protein 1 from Caenorhabditis elegans.